Here is a 391-residue protein sequence, read N- to C-terminus: Phosphoglycerate kinase (391 aa).

Substrate-binding positions include 21–23, Arg-36, 59–62, Arg-114, and Arg-147; these read DLN and HLGR. ATP is bound by residues Lys-198, Glu-315, and 344–347; that span reads GGDT.

The protein belongs to the phosphoglycerate kinase family. In terms of assembly, monomer.

The protein resides in the cytoplasm. The enzyme catalyses (2R)-3-phosphoglycerate + ATP = (2R)-3-phospho-glyceroyl phosphate + ADP. It participates in carbohydrate degradation; glycolysis; pyruvate from D-glyceraldehyde 3-phosphate: step 2/5. This chain is Phosphoglycerate kinase, found in Actinobacillus succinogenes (strain ATCC 55618 / DSM 22257 / CCUG 43843 / 130Z).